We begin with the raw amino-acid sequence, 213 residues long: Large ribosomal subunit protein uL3 (213 aa).

Residue Gln151 is modified to N5-methylglutamine.

This sequence belongs to the universal ribosomal protein uL3 family. Part of the 50S ribosomal subunit. Forms a cluster with proteins L14 and L19. Post-translationally, methylated by PrmB.

One of the primary rRNA binding proteins, it binds directly near the 3'-end of the 23S rRNA, where it nucleates assembly of the 50S subunit. The polypeptide is Large ribosomal subunit protein uL3 (Allorhizobium ampelinum (strain ATCC BAA-846 / DSM 112012 / S4) (Agrobacterium vitis (strain S4))).